The sequence spans 374 residues: Putative glutamate--cysteine ligase 2-2 (374 aa).

The protein belongs to the glutamate--cysteine ligase type 2 family. YbdK subfamily.

It carries out the reaction L-cysteine + L-glutamate + ATP = gamma-L-glutamyl-L-cysteine + ADP + phosphate + H(+). In terms of biological role, ATP-dependent carboxylate-amine ligase which exhibits weak glutamate--cysteine ligase activity. In Rhodococcus jostii (strain RHA1), this protein is Putative glutamate--cysteine ligase 2-2.